We begin with the raw amino-acid sequence, 260 residues long: MNSDTLNIGNKIFQSRLIVGSGKYKDFKTTYEATMASEAEMITVAVRRVNITNPKEENLLDYFKGSSVQFLPNSAGCTTAEETITLFRLTREATGIDFIKLEIIGDTQKTLYPDVMETLKACEVLAKDGFTVLAYTNDDPIMARRLEEAGASAIMPLAAPIGSGLGIQNRYNVVFIKEAIKVPLIVDAGVGCASDAAIAMELGADAVLTNTAIAQAQNPILMASAMRDAVRAGRQSYLAGRIPKKPYASASSPTDGMARF.

Lys100 functions as the Schiff-base intermediate with DXP in the catalytic mechanism. 1-deoxy-D-xylulose 5-phosphate-binding positions include Gly162, 188 to 189, and 210 to 211; these read AG and NT.

This sequence belongs to the ThiG family. As to quaternary structure, homotetramer. Forms heterodimers with either ThiH or ThiS.

The protein localises to the cytoplasm. The enzyme catalyses [ThiS sulfur-carrier protein]-C-terminal-Gly-aminoethanethioate + 2-iminoacetate + 1-deoxy-D-xylulose 5-phosphate = [ThiS sulfur-carrier protein]-C-terminal Gly-Gly + 2-[(2R,5Z)-2-carboxy-4-methylthiazol-5(2H)-ylidene]ethyl phosphate + 2 H2O + H(+). The protein operates within cofactor biosynthesis; thiamine diphosphate biosynthesis. In terms of biological role, catalyzes the rearrangement of 1-deoxy-D-xylulose 5-phosphate (DXP) to produce the thiazole phosphate moiety of thiamine. Sulfur is provided by the thiocarboxylate moiety of the carrier protein ThiS. In vitro, sulfur can be provided by H(2)S. The polypeptide is Thiazole synthase (Wolinella succinogenes (strain ATCC 29543 / DSM 1740 / CCUG 13145 / JCM 31913 / LMG 7466 / NCTC 11488 / FDC 602W) (Vibrio succinogenes)).